Reading from the N-terminus, the 63-residue chain is Cytotoxin homolog S3C2 (63 aa).

Intrachain disulfides connect C3/C22, C15/C40, C44/C55, and C56/C61.

The protein belongs to the three-finger toxin family. Short-chain subfamily. Orphan group XVI sub-subfamily. As to expression, expressed by the venom gland.

It is found in the secreted. This chain is Cytotoxin homolog S3C2, found in Aspidelaps scutatus (Shield-nose snake).